The primary structure comprises 391 residues: Ferrochelatase (391 aa).

The Fe cation site is built by H196 and E281.

This sequence belongs to the ferrochelatase family.

It is found in the cytoplasm. It carries out the reaction heme b + 2 H(+) = protoporphyrin IX + Fe(2+). It participates in porphyrin-containing compound metabolism; protoheme biosynthesis; protoheme from protoporphyrin-IX: step 1/1. Functionally, catalyzes the ferrous insertion into protoporphyrin IX. The chain is Ferrochelatase from Parasynechococcus marenigrum (strain WH8102).